Consider the following 473-residue polypeptide: Vasculin (473 aa).

5 disordered regions span residues 1 to 26 (MAQHDFAPAWLNFPTPPSSTKSSLNF), 44 to 163 (RRRH…EYPP), 196 to 240 (SQPV…SFPH), 258 to 286 (NFSPSTTSVKECNRSNSSSPVDKLNQQPR), and 305 to 342 (LKRDRVEEEHEDESHVGSEKDDDSFNLHNSNSTHQERD). Serine 49 carries the post-translational modification Phosphoserine. At arginine 87 the chain carries Omega-N-methylarginine. Residues 93 to 107 (GSSRSRSSIFHSGKS) are compositionally biased toward low complexity. A compositionally biased stretch (basic and acidic residues) spans 119–133 (ETGRKDDKRERKQFE). Residues serine 274, serine 276, serine 322, and serine 381 each carry the phosphoserine modification. Residues 305–329 (LKRDRVEEEHEDESHVGSEKDDDSF) are compositionally biased toward basic and acidic residues. Residues 444-473 (GPWKNSTFKPTIENDDTETSSSDTSDDDDV) form a disordered region. Residues 456–473 (ENDDTETSSSDTSDDDDV) show a composition bias toward acidic residues.

This sequence belongs to the vasculin family. Interacts with GTF2B, GTF2F2, RNA polymerase II and TBP.

The protein resides in the nucleus. In terms of biological role, functions as a GC-rich promoter-specific transactivating transcription factor. The protein is Vasculin (GPBP1) of Bos taurus (Bovine).